A 324-amino-acid polypeptide reads, in one-letter code: MPRTPSYTNTKTTQVNNVTEITVFILLGFTDDVDMNIFLFILFLAIYVVTLIGNLGLVVLVIEDSRLHNPMYYFLTVLSSLDACFSSVLTPKMLVNFLSKNKSISFAGCATQMLLFVTFGTTECFLLAAMAYDRYLAIYSPLLYAVRMSPRVYVPLIIASYTGGILHATIHTVATFSLSFCGSNEIRHVFCDIPPLLALSCSDTHLNQLLLFYCAGSIELITILIVLVSYGFVLLAILKINSAEGRRKIFSTCGAHLTGVSIFHGTILFMYVRPSSNYTLEQDMVVSTFYTIVIPMLNPIIYSLRNKDVKEAMRKLLKRKLVHE.

Topologically, residues 1–37 (MPRTPSYTNTKTTQVNNVTEITVFILLGFTDDVDMNI) are extracellular. N-linked (GlcNAc...) asparagine glycosylation is present at Asn-17. Residues 38–58 (FLFILFLAIYVVTLIGNLGLV) traverse the membrane as a helical segment. The Cytoplasmic portion of the chain corresponds to 59–66 (VLVIEDSR). The chain crosses the membrane as a helical span at residues 67-87 (LHNPMYYFLTVLSSLDACFSS). The Extracellular portion of the chain corresponds to 88–111 (VLTPKMLVNFLSKNKSISFAGCAT). An N-linked (GlcNAc...) asparagine glycan is attached at Asn-101. The cysteines at positions 109 and 201 are disulfide-linked. Residues 112 to 132 (QMLLFVTFGTTECFLLAAMAY) form a helical membrane-spanning segment. Over 133–145 (DRYLAIYSPLLYA) the chain is Cytoplasmic. Residues 146–166 (VRMSPRVYVPLIIASYTGGIL) traverse the membrane as a helical segment. Residues 167-208 (HATIHTVATFSLSFCGSNEIRHVFCDIPPLLALSCSDTHLNQ) lie on the Extracellular side of the membrane. A helical membrane pass occupies residues 209-229 (LLLFYCAGSIELITILIVLVS). The Cytoplasmic portion of the chain corresponds to 230-249 (YGFVLLAILKINSAEGRRKI). The helical transmembrane segment at 250-270 (FSTCGAHLTGVSIFHGTILFM) threads the bilayer. The Extracellular portion of the chain corresponds to 271–283 (YVRPSSNYTLEQD). Residue Asn-277 is glycosylated (N-linked (GlcNAc...) asparagine). A helical transmembrane segment spans residues 284 to 304 (MVVSTFYTIVIPMLNPIIYSL). Residues 305-324 (RNKDVKEAMRKLLKRKLVHE) are Cytoplasmic-facing.

It belongs to the G-protein coupled receptor 1 family.

The protein localises to the cell membrane. In terms of biological role, potential odorant receptor. The chain is Olfactory receptor 5T17 from Mus musculus (Mouse).